The chain runs to 328 residues: Lytic polysaccharide monooxygenase aasB (328 aa).

Positions 1–18 (MKAFFAISASTLLATVHG) are cleaved as a signal peptide. Cu(2+) is bound at residue histidine 19. The cysteines at positions 40 and 43 are disulfide-linked. Asparagine 54 carries an N-linked (GlcNAc...) asparagine glycan. 6 cysteine pairs are disulfide-bonded: cysteine 66/cysteine 245, cysteine 102/cysteine 203, cysteine 118/cysteine 145, cysteine 153/cysteine 161, cysteine 167/cysteine 173, and cysteine 181/cysteine 192. Histidine 109 provides a ligand contact to Cu(2+). Position 242 (tyrosine 242) interacts with Cu(2+). N-linked (GlcNAc...) asparagine glycosylation is present at asparagine 306.

The protein belongs to the polysaccharide monooxygenase AA13 family. It depends on Cu(2+) as a cofactor.

The protein resides in the secreted. The enzyme catalyses starch + reduced acceptor + O2 = D-glucono-1,5-lactone-terminated malto-oligosaccharides + short-chain malto-oligosaccharides + acceptor + H2O.. Its function is as follows. Lytic polysaccharide monooxygenase involved in breakdown of granular resistant starch. This is Lytic polysaccharide monooxygenase aasB from Emericella nidulans (strain FGSC A4 / ATCC 38163 / CBS 112.46 / NRRL 194 / M139) (Aspergillus nidulans).